The sequence spans 61 residues: Large ribosomal subunit protein bL32 (61 aa).

Basic residues predominate over residues Met-1–His-19. The tract at residues Met-1–Asp-20 is disordered.

The protein belongs to the bacterial ribosomal protein bL32 family.

This chain is Large ribosomal subunit protein bL32, found in Porphyromonas gingivalis (strain ATCC 33277 / DSM 20709 / CIP 103683 / JCM 12257 / NCTC 11834 / 2561).